Here is a 99-residue protein sequence, read N- to C-terminus: Protein RnfH (99 aa).

Belongs to the UPF0125 (RnfH) family.

The sequence is that of Protein RnfH from Buchnera aphidicola subsp. Acyrthosiphon pisum (strain 5A).